A 627-amino-acid chain; its full sequence is Membrane protein insertase YidC (627 aa).

Residues 8-28 (LFLALILSMGIWMGVNYFFFP) traverse the membrane as a helical segment. Residues 33-57 (KKNTETKQTQSDKTSENTKQQITSG) show a composition bias toward polar residues. Residues 33–68 (KKNTETKQTQSDKTSENTKQQITSGKTKESNSADPV) form a disordered region. The segment covering 58–68 (KTKESNSADPV) has biased composition (basic and acidic residues). Helical transmembrane passes span 417–437 (FTIPNYGWSIIIFAILFKLVF), 488–508 (VGGCLPMVIQIPIFIALYTAF), 536–556 (AIPYFTQTGIGLNLLALLMVG), and 575–595 (MLMYVMPVMMLYIFWNMPSGV).

It belongs to the OXA1/ALB3/YidC family. Type 1 subfamily. In terms of assembly, interacts with the Sec translocase complex via SecD. Specifically interacts with transmembrane segments of nascent integral membrane proteins during membrane integration.

It is found in the cell inner membrane. In terms of biological role, required for the insertion and/or proper folding and/or complex formation of integral membrane proteins into the membrane. Involved in integration of membrane proteins that insert both dependently and independently of the Sec translocase complex, as well as at least some lipoproteins. Aids folding of multispanning membrane proteins. This chain is Membrane protein insertase YidC, found in Leptospira interrogans serogroup Icterohaemorrhagiae serovar Lai (strain 56601).